Here is a 64-residue protein sequence, read N- to C-terminus: Large ribosomal subunit protein eL37 (64 aa).

C20, C23, C35, and C38 together coordinate Zn(2+). The C4-type zinc-finger motif lies at 20–38 (CRRCGRRSFHVRKKVCAAC).

This sequence belongs to the eukaryotic ribosomal protein eL37 family. Zn(2+) serves as cofactor.

Binds to the 23S rRNA. The polypeptide is Large ribosomal subunit protein eL37 (Methanococcus maripaludis (strain C5 / ATCC BAA-1333)).